Reading from the N-terminus, the 480-residue chain is Cytochrome b-c1 complex subunit 1, mitochondrial (480 aa).

Residues 1–34 (MAASAVCRAACSGTQVLLRTRRSPALLRLPALRG) constitute a mitochondrion transit peptide. An N6-acetyllysine mark is found at Lys111 and Lys138. An N6-acetyllysine; alternate modification is found at Lys163. The residue at position 163 (Lys163) is an N6-succinyllysine; alternate. Ser212 is modified (phosphoserine). Thr214 carries the phosphothreonine modification. At Lys248 the chain carries N6-acetyllysine.

This sequence belongs to the peptidase M16 family. UQCRC1/QCR1 subfamily. In terms of assembly, component of the ubiquinol-cytochrome c oxidoreductase (cytochrome b-c1 complex, complex III, CIII), a multisubunit enzyme composed of 11 subunits. The complex is composed of 3 respiratory subunits cytochrome b, cytochrome c1 and Rieske protein UQCRFS1, 2 core protein subunits UQCRC1/QCR1 and UQCRC2/QCR2, and 6 low-molecular weight protein subunits UQCRH/QCR6, UQCRB/QCR7, UQCRQ/QCR8, UQCR10/QCR9, UQCR11/QCR10 and subunit 9, the cleavage product of Rieske protein UQCRFS1. The complex exists as an obligatory dimer and forms supercomplexes (SCs) in the inner mitochondrial membrane with NADH-ubiquinone oxidoreductase (complex I, CI) and cytochrome c oxidase (complex IV, CIV), resulting in different assemblies (supercomplex SCI(1)III(2)IV(1) and megacomplex MCI(2)III(2)IV(2)). Interacts with UQCC6. Interacts with STMP1. Acetylation of Lys-138 is observed in liver mitochondria from fasted mice but not from fed mice. In terms of tissue distribution, expressed in neurons and astrocytes of the cerebral cortex and hippocampus (at protein level).

The protein resides in the mitochondrion inner membrane. Functionally, component of the ubiquinol-cytochrome c oxidoreductase, a multisubunit transmembrane complex that is part of the mitochondrial electron transport chain which drives oxidative phosphorylation. The respiratory chain contains 3 multisubunit complexes succinate dehydrogenase (complex II, CII), ubiquinol-cytochrome c oxidoreductase (cytochrome b-c1 complex, complex III, CIII) and cytochrome c oxidase (complex IV, CIV), that cooperate to transfer electrons derived from NADH and succinate to molecular oxygen, creating an electrochemical gradient over the inner membrane that drives transmembrane transport and the ATP synthase. The cytochrome b-c1 complex catalyzes electron transfer from ubiquinol to cytochrome c, linking this redox reaction to translocation of protons across the mitochondrial inner membrane, with protons being carried across the membrane as hydrogens on the quinol. In the process called Q cycle, 2 protons are consumed from the matrix, 4 protons are released into the intermembrane space and 2 electrons are passed to cytochrome c. The 2 core subunits UQCRC1/QCR1 and UQCRC2/QCR2 are homologous to the 2 mitochondrial-processing peptidase (MPP) subunits beta-MPP and alpha-MPP respectively, and they seem to have preserved their MPP processing properties. May be involved in the in situ processing of UQCRFS1 into the mature Rieske protein and its mitochondrial targeting sequence (MTS)/subunit 9 when incorporated into complex III. Seems to play an important role in the maintenance of proper mitochondrial function in nigral dopaminergic neurons. The polypeptide is Cytochrome b-c1 complex subunit 1, mitochondrial (Uqcrc1) (Mus musculus (Mouse)).